We begin with the raw amino-acid sequence, 260 residues long: Granzyme A (260 aa).

The signal sequence occupies residues 1 to 26 (MRNASGPRGPSLATLLFLLLIPEGGC). Positions 27-28 (ER) are cleaved as a propeptide — activation peptide. The 229-residue stretch at 29–257 (IIGGDTVVPH…HLNWIKKIMK (229 aa)) folds into the Peptidase S1 domain. Residues cysteine 54 and cysteine 70 are joined by a disulfide bond. Residues histidine 69 and aspartate 113 each act as charge relay system in the active site. Intrachain disulfides connect cysteine 147–cysteine 217, cysteine 178–cysteine 196, and cysteine 207–cysteine 232. Asparagine 157 and asparagine 169 each carry an N-linked (GlcNAc...) asparagine glycan. Serine 211 functions as the Charge relay system in the catalytic mechanism.

It belongs to the peptidase S1 family. Granzyme subfamily. In terms of assembly, homodimer; disulfide-linked. Interacts with APEX1. In terms of tissue distribution, found in cytotoxic lymphocytes and in normal lymphoid tissues such as thymus and spleen. More abundant in lymphoid tissues than isoform HF2.

The protein localises to the secreted. Its subcellular location is the cytoplasmic granule. The enzyme catalyses Hydrolysis of proteins, including fibronectin, type IV collagen and nucleolin. Preferential cleavage: -Arg-|-Xaa-, -Lys-|-Xaa- &gt;&gt; -Phe-|-Xaa- in small molecule substrates.. Abundant protease in the cytosolic granules of cytotoxic T-cells and NK-cells which activates caspase-independent pyroptosis when delivered into the target cell through the immunological synapse. It cleaves after Lys or Arg. Cleaves APEX1 after 'Lys-31' and destroys its oxidative repair activity. Cleaves the nucleosome assembly protein SET after 'Lys-189', which disrupts its nucleosome assembly activity and allows the SET complex to translocate into the nucleus to nick and degrade the DNA. This is Granzyme A (Gzma) from Mus musculus (Mouse).